The following is a 257-amino-acid chain: Acetylglutamate kinase (257 aa).

Residues 43–44, R65, and N157 each bind substrate; that span reads GG. Residues 180 to 185 and 208 to 210 contribute to the ATP site; these read DISGIL and IIT.

This sequence belongs to the acetylglutamate kinase family. ArgB subfamily. As to quaternary structure, homodimer.

It is found in the cytoplasm. It catalyses the reaction N-acetyl-L-glutamate + ATP = N-acetyl-L-glutamyl 5-phosphate + ADP. It functions in the pathway amino-acid biosynthesis; L-arginine biosynthesis; N(2)-acetyl-L-ornithine from L-glutamate: step 2/4. In terms of biological role, catalyzes the ATP-dependent phosphorylation of N-acetyl-L-glutamate. The protein is Acetylglutamate kinase of Sodalis glossinidius (strain morsitans).